The following is a 359-amino-acid chain: Norspermidine sensor (359 aa).

Positions 1 to 33 (MTNFCNEWVSYSQMIKRFLSLMVLNTVCYQASA) are cleaved as a signal peptide.

Belongs to the bacterial solute-binding protein PotD/PotF family.

The protein resides in the periplasm. In terms of biological role, acts as a sensor of norspermidine and enhances biofilm formation. When complexed to norspermidine, could interact with the periplasmic portion of MbaA to regulate its enzymatic activity. In Vibrio cholerae serotype O1 (strain ATCC 39315 / El Tor Inaba N16961), this protein is Norspermidine sensor (nspS).